We begin with the raw amino-acid sequence, 145 residues long: 3-hydroxyacyl-[acyl-carrier-protein] dehydratase FabZ (145 aa).

Residue H49 is part of the active site.

It belongs to the thioester dehydratase family. FabZ subfamily.

The protein localises to the cytoplasm. The enzyme catalyses a (3R)-hydroxyacyl-[ACP] = a (2E)-enoyl-[ACP] + H2O. In terms of biological role, involved in unsaturated fatty acids biosynthesis. Catalyzes the dehydration of short chain beta-hydroxyacyl-ACPs and long chain saturated and unsaturated beta-hydroxyacyl-ACPs. The polypeptide is 3-hydroxyacyl-[acyl-carrier-protein] dehydratase FabZ (Ehrlichia ruminantium (strain Welgevonden)).